A 366-amino-acid chain; its full sequence is MSSAMGAVRPRRRQRRGIATTQLAAGRERRDEDDDAVKLRGEMVYVSSGTIAYSAWMFETIFGAGGSGAYSVAERPVMLTRVGEGLESCSCSYMGLTLYPVKTEQAGRMKRLAYRETLEPCVDCDAPGEQMAGGAVADEAYEDEDGADVCTIGVLENGTEAWPYHEVFFFPIVPTLDRWWPCVPSPALFLAIAKLATARLVARRRENGEPNGTTPSVHPLFYSTRVEAPPGSKELFLSTRELLGPLYDPLFDATEEDAGLLGIGTVVNANDFQAGVGLAFRPYDERSREEKQAVAAELRTLICGILDEDIGPGPCYVIVDRGPVRRRTSFYAAAGFKYTSVFEPAGSGKTKCHSVRLLNSALKPLL.

This is an uncharacterized protein from Amazona oratrix (yellow-headed parrot).